The primary structure comprises 351 residues: MKKQLDQLTAYTPGLSPESLKKQYGIKGELHKLASNENVYGPSPKVKTAIQSHLDELYYYPESGSPKLREAISQQLNVDASRILFGAGLDEVILMISRAVLSPGDKIITSESTFGQYYHNAIVESADVIQVPLKDGGFDLDGMLQQIDNKTSLIWLCNPNNPTGTYFSHDELFNFLKRVPSDIPVLIDEAYVEFVTADDFPDTLKLQEDFDNAFLLRTFSKAYGLAGLRVGYVIASEDAIEKWNIIRPPFNVTRISEYAAIAALEDQEYLKEVTQKNSFERDKFYQIPQSQHFLPSQANFVFVKTSRSQALYDALLNVGCITRLFPNGVRITIGLPEQNNKMIEVLKHFEY.

An N6-(pyridoxal phosphate)lysine modification is found at K221.

Belongs to the class-II pyridoxal-phosphate-dependent aminotransferase family. Histidinol-phosphate aminotransferase subfamily. In terms of assembly, homodimer. It depends on pyridoxal 5'-phosphate as a cofactor.

It carries out the reaction L-histidinol phosphate + 2-oxoglutarate = 3-(imidazol-4-yl)-2-oxopropyl phosphate + L-glutamate. The protein operates within amino-acid biosynthesis; L-histidine biosynthesis; L-histidine from 5-phospho-alpha-D-ribose 1-diphosphate: step 7/9. In Staphylococcus epidermidis (strain ATCC 35984 / DSM 28319 / BCRC 17069 / CCUG 31568 / BM 3577 / RP62A), this protein is Histidinol-phosphate aminotransferase.